Reading from the N-terminus, the 193-residue chain is Non-specific lipid transfer protein GPI-anchored 1 (193 aa).

A signal peptide spans 1-22 (MKGLHLHLVLVTMTIVASIAAA). 4 disulfide bridges follow: cysteine 35/cysteine 76, cysteine 45/cysteine 60, cysteine 61/cysteine 106, and cysteine 74/cysteine 116. Residues asparagine 110 and asparagine 135 are each glycosylated (N-linked (GlcNAc...) asparagine). Residues 138 to 161 (TTPVAPAGKSPATPATSTDKGGSA) form a disordered region. A lipid anchor (GPI-anchor amidated aspartate) is attached at aspartate 165. Residues 166-193 (GHAVVALAVALMAVSFVLTLPRHVTLGM) constitute a propeptide, removed in mature form.

This sequence belongs to the plant LTP family. Post-translationally, O-glycosylated on hydroxyprolines; noncontiguous hydroxylproline residues are glycosylated with arabinogalactan. Up-regulated in the epidermis of stems and leaves. Expressed in the epidermis, stem cortex, vascular bundles and mesophyll cells in root tips, cotyledons, seedlings, leaves, caulines, flowers, siliques, pollen, and early-developing seeds.

The protein localises to the cell membrane. It is found in the secreted. The protein resides in the cell wall. Its subcellular location is the endoplasmic reticulum. It localises to the golgi apparatus. In terms of biological role, lipid transfer protein that, together with LTPG2, binds to lipids and functions as a component of the cuticular lipid export machinery that performs extensive export of intracellular lipids (e.g. C29 alkane) from epidermal cells to the surface to build the cuticular wax layer and silique walls. Involved in the establishment of resistance to the necrotrophic fungal pathogen Alternaria brassicicola. Contributes to pre-invasive defense against some non-host powdery mildew pathogens by preventing the penetration of the epidermal cell wall by the fungal agents (e.g. Blumeria graminis f. sp. hordei (Bgh)). Maybe involved in seed and ovule maturation and development, probably by regulating the fatty acids homeostasis during suberin and sporopollenin biosynthesis or deposition. In Arabidopsis thaliana (Mouse-ear cress), this protein is Non-specific lipid transfer protein GPI-anchored 1.